The primary structure comprises 68 residues: U4-agatoxin-Ao1a (68 aa).

The first 25 residues, Met-1–Ala-25, serve as a signal peptide directing secretion. Positions Glu-26–Arg-36 are excised as a propeptide. 4 disulfides stabilise this stretch: Cys-39-Cys-52, Cys-46-Cys-57, Cys-51-Cys-66, and Cys-59-Cys-64.

Belongs to the neurotoxin 33 family. Expressed by the venom gland.

The protein resides in the secreted. The protein is U4-agatoxin-Ao1a of Agelena orientalis (Funnel-web spider).